A 164-amino-acid chain; its full sequence is Transcription antitermination protein NusB (164 aa).

This sequence belongs to the NusB family.

Functionally, involved in transcription antitermination. Required for transcription of ribosomal RNA (rRNA) genes. Binds specifically to the boxA antiterminator sequence of the ribosomal RNA (rrn) operons. This Chlorobaculum parvum (strain DSM 263 / NCIMB 8327) (Chlorobium vibrioforme subsp. thiosulfatophilum) protein is Transcription antitermination protein NusB.